Consider the following 526-residue polypeptide: Peptide chain release factor 3 (526 aa).

The 269-residue stretch at 9–277 (NKRRTFAIIS…DFVEYAPGPQ (269 aa)) folds into the tr-type G domain. GTP-binding positions include 18 to 25 (SHPDAGKT), 86 to 90 (DTPGH), and 140 to 143 (NKLD).

The protein belongs to the TRAFAC class translation factor GTPase superfamily. Classic translation factor GTPase family. PrfC subfamily.

The protein localises to the cytoplasm. Its function is as follows. Increases the formation of ribosomal termination complexes and stimulates activities of RF-1 and RF-2. It binds guanine nucleotides and has strong preference for UGA stop codons. It may interact directly with the ribosome. The stimulation of RF-1 and RF-2 is significantly reduced by GTP and GDP, but not by GMP. This chain is Peptide chain release factor 3, found in Legionella pneumophila (strain Lens).